An 88-amino-acid polypeptide reads, in one-letter code: Small ribosomal subunit protein uS12 (88 aa).

The interval 1-24 (RKGRRDKIGKVKTAALKGSPQRRG) is disordered. Asp81 is subject to 3-methylthioaspartic acid.

It belongs to the universal ribosomal protein uS12 family. Part of the 30S ribosomal subunit. Contacts proteins S8 and S17. May interact with IF1 in the 30S initiation complex.

With S4 and S5 plays an important role in translational accuracy. In terms of biological role, interacts with and stabilizes bases of the 16S rRNA that are involved in tRNA selection in the A site and with the mRNA backbone. Located at the interface of the 30S and 50S subunits, it traverses the body of the 30S subunit contacting proteins on the other side and probably holding the rRNA structure together. The combined cluster of proteins S8, S12 and S17 appears to hold together the shoulder and platform of the 30S subunit. The sequence is that of Small ribosomal subunit protein uS12 (rpsL) from Mycobacterium szulgai.